Here is a 190-residue protein sequence, read N- to C-terminus: Peptidyl-tRNA hydrolase (190 aa).

Y14 serves as a coordination point for tRNA. H19 acts as the Proton acceptor in catalysis. The tRNA site is built by Y64, N66, and N112.

This sequence belongs to the PTH family. Monomer.

Its subcellular location is the cytoplasm. It carries out the reaction an N-acyl-L-alpha-aminoacyl-tRNA + H2O = an N-acyl-L-amino acid + a tRNA + H(+). Its function is as follows. Hydrolyzes ribosome-free peptidyl-tRNAs (with 1 or more amino acids incorporated), which drop off the ribosome during protein synthesis, or as a result of ribosome stalling. Functionally, catalyzes the release of premature peptidyl moieties from peptidyl-tRNA molecules trapped in stalled 50S ribosomal subunits, and thus maintains levels of free tRNAs and 50S ribosomes. This chain is Peptidyl-tRNA hydrolase, found in Chlorobaculum parvum (strain DSM 263 / NCIMB 8327) (Chlorobium vibrioforme subsp. thiosulfatophilum).